The following is a 655-amino-acid chain: Acetyl-coenzyme A synthetase (655 aa).

CoA-binding positions include 196-199 (RGGK) and Thr-316. ATP is bound by residues 392-394 (GEP), 416-421 (DTWWQT), Asp-507, and Arg-522. Ser-530 serves as a coordination point for CoA. Arg-533 contacts ATP. Residues Val-544 and Val-549 each coordinate Mg(2+). Lys-619 bears the N6-acetyllysine mark.

It belongs to the ATP-dependent AMP-binding enzyme family. The cofactor is Mg(2+). Acetylated. Deacetylation by the SIR2-homolog deacetylase activates the enzyme.

The enzyme catalyses acetate + ATP + CoA = acetyl-CoA + AMP + diphosphate. Its function is as follows. Catalyzes the conversion of acetate into acetyl-CoA (AcCoA), an essential intermediate at the junction of anabolic and catabolic pathways. AcsA undergoes a two-step reaction. In the first half reaction, AcsA combines acetate with ATP to form acetyl-adenylate (AcAMP) intermediate. In the second half reaction, it can then transfer the acetyl group from AcAMP to the sulfhydryl group of CoA, forming the product AcCoA. The polypeptide is Acetyl-coenzyme A synthetase (Thiobacillus denitrificans (strain ATCC 25259 / T1)).